A 341-amino-acid polypeptide reads, in one-letter code: Glycerol-3-phosphate dehydrogenase [NAD(P)+] (341 aa).

Residues serine 11, tryptophan 12, arginine 33, and lysine 106 each coordinate NADPH. Residues lysine 106, glycine 137, and serine 139 each contribute to the sn-glycerol 3-phosphate site. Alanine 141 serves as a coordination point for NADPH. Positions 192, 245, 255, 256, and 257 each coordinate sn-glycerol 3-phosphate. Lysine 192 acts as the Proton acceptor in catalysis. Arginine 256 contacts NADPH. NADPH is bound by residues valine 280 and glutamate 282.

This sequence belongs to the NAD-dependent glycerol-3-phosphate dehydrogenase family.

It localises to the cytoplasm. It catalyses the reaction sn-glycerol 3-phosphate + NAD(+) = dihydroxyacetone phosphate + NADH + H(+). It carries out the reaction sn-glycerol 3-phosphate + NADP(+) = dihydroxyacetone phosphate + NADPH + H(+). The protein operates within membrane lipid metabolism; glycerophospholipid metabolism. Functionally, catalyzes the reduction of the glycolytic intermediate dihydroxyacetone phosphate (DHAP) to sn-glycerol 3-phosphate (G3P), the key precursor for phospholipid synthesis. The protein is Glycerol-3-phosphate dehydrogenase [NAD(P)+] of Bacillus cytotoxicus (strain DSM 22905 / CIP 110041 / 391-98 / NVH 391-98).